We begin with the raw amino-acid sequence, 116 residues long: MANHFRTDRVGMEIKREVNEILQKKVRDPRVQGVTITDVQMLGDLSVAKVYYTILSNLASDNQKAQIGLEKATGTIKRELGRNLKLYKIPDLTFVKDESIEYGNKIDEMLRNLDKN.

It belongs to the RbfA family. Monomer. Binds 30S ribosomal subunits, but not 50S ribosomal subunits or 70S ribosomes.

The protein localises to the cytoplasm. Functionally, one of several proteins that assist in the late maturation steps of the functional core of the 30S ribosomal subunit. Associates with free 30S ribosomal subunits (but not with 30S subunits that are part of 70S ribosomes or polysomes). Required for efficient processing of 16S rRNA. May interact with the 5'-terminal helix region of 16S rRNA. This chain is Ribosome-binding factor A, found in Streptococcus pneumoniae (strain ATCC 700669 / Spain 23F-1).